A 509-amino-acid polypeptide reads, in one-letter code: Putative Rieske 2Fe-2S iron-sulfur protein YhfW (509 aa).

One can recognise a Rieske domain in the interval 423-509; the sequence is KPDVQFEDIS…IKPLKQIDLD (87 aa). [2Fe-2S] cluster contacts are provided by C463, H465, C481, and H484. The cysteines at positions 468 and 483 are disulfide-linked.

Belongs to the Rieske iron-sulfur protein family. Requires [2Fe-2S] cluster as cofactor.

In Bacillus subtilis (strain 168), this protein is Putative Rieske 2Fe-2S iron-sulfur protein YhfW (yhfW).